The chain runs to 363 residues: Peptide chain release factor 1 (363 aa).

Glutamine 237 carries the N5-methylglutamine modification. Basic and acidic residues predominate over residues 286 to 296 (EKRRSAEESTR). Positions 286-305 (EKRRSAEESTRRSLVASGDR) are disordered.

The protein belongs to the prokaryotic/mitochondrial release factor family. Methylated by PrmC. Methylation increases the termination efficiency of RF1.

Its subcellular location is the cytoplasm. Peptide chain release factor 1 directs the termination of translation in response to the peptide chain termination codons UAG and UAA. The protein is Peptide chain release factor 1 of Shewanella baltica (strain OS155 / ATCC BAA-1091).